The sequence spans 441 residues: Hexane cyclase gkaB (441 aa).

The first 25 residues, 1-25 (MTKFLAGAAIVLAVAFGSFFSQSST), serve as a signal peptide directing secretion. 4 N-linked (GlcNAc...) asparagine glycosylation sites follow: Asn-77, Asn-153, Asn-184, and Asn-308.

The protein belongs to the Diels-Alderase family.

It functions in the pathway mycotoxin biosynthesis. In terms of biological role, hexane cyclase; part of the gene cluster that mediates the biosynthesis of GKK1032, fungal natural products containing a macrocyclic para-cyclophane connected to a decahydrofluorene ring system that show potent antitumor activities. Within the pathway, gkaB functions synergistically with gkaX and gkaZ to form the cyclophane. The pathway begins with the PKS-NRPS gkaA which, with the help of the trans-enoyl reductase gkaC, synthesizes the polyketide-tyrosyl acyl thioester product which can be reductively off-loaded by the terminal reductase (R) domain in gkaA. The alpha/beta hydrolase gkaG is then required to catalyze the subsequent Knoevenagel condensation that affords the 3-pyrrolin-2-one ring, whereas the three proteins gkaB, gkaX and gkaZ then function synergistically to form the cyclophane. The polypeptide is Hexane cyclase gkaB (Penicillium citrinum).